The chain runs to 281 residues: Hydroxyethylthiazole kinase (281 aa).

Positions 124 and 169 each coordinate ATP.

Belongs to the Thz kinase family. Requires Mg(2+) as cofactor.

The catalysed reaction is 5-(2-hydroxyethyl)-4-methylthiazole + ATP = 4-methyl-5-(2-phosphooxyethyl)-thiazole + ADP + H(+). It participates in cofactor biosynthesis; thiamine diphosphate biosynthesis; 4-methyl-5-(2-phosphoethyl)-thiazole from 5-(2-hydroxyethyl)-4-methylthiazole: step 1/1. In terms of biological role, catalyzes the phosphorylation of the hydroxyl group of 4-methyl-5-beta-hydroxyethylthiazole (THZ). The polypeptide is Hydroxyethylthiazole kinase (Rhodococcus erythropolis (strain PR4 / NBRC 100887)).